A 241-amino-acid chain; its full sequence is Carboxy-S-adenosyl-L-methionine synthase (241 aa).

Residues tyrosine 38, 63 to 65 (GCS), 88 to 89 (DN), 116 to 117 (DI), asparagine 131, and arginine 198 contribute to the S-adenosyl-L-methionine site.

This sequence belongs to the class I-like SAM-binding methyltransferase superfamily. Cx-SAM synthase family. As to quaternary structure, homodimer.

The catalysed reaction is prephenate + S-adenosyl-L-methionine = carboxy-S-adenosyl-L-methionine + 3-phenylpyruvate + H2O. Functionally, catalyzes the conversion of S-adenosyl-L-methionine (SAM) to carboxy-S-adenosyl-L-methionine (Cx-SAM). In Haemophilus influenzae (strain PittEE), this protein is Carboxy-S-adenosyl-L-methionine synthase.